A 297-amino-acid polypeptide reads, in one-letter code: N-acetylneuraminate lyase (297 aa).

Aceneuramate-binding residues include S47 and T48. The active-site Proton donor is Y137. Catalysis depends on K165, which acts as the Schiff-base intermediate with substrate. Residues T167, G189, D191, E192, and S208 each coordinate aceneuramate.

This sequence belongs to the DapA family. NanA subfamily. As to quaternary structure, homotetramer.

The protein localises to the cytoplasm. It carries out the reaction aceneuramate = aldehydo-N-acetyl-D-mannosamine + pyruvate. Its pathway is amino-sugar metabolism; N-acetylneuraminate degradation; D-fructose 6-phosphate from N-acetylneuraminate: step 1/5. Its function is as follows. Catalyzes the reversible aldol cleavage of N-acetylneuraminic acid (sialic acid; Neu5Ac) to form pyruvate and N-acetylmannosamine (ManNAc) via a Schiff base intermediate. This is N-acetylneuraminate lyase from Shigella boydii serotype 4 (strain Sb227).